The primary structure comprises 258 residues: Imidazole glycerol phosphate synthase subunit HisF (258 aa).

Catalysis depends on residues D12 and D131.

This sequence belongs to the HisA/HisF family. As to quaternary structure, heterodimer of HisH and HisF.

It is found in the cytoplasm. It catalyses the reaction 5-[(5-phospho-1-deoxy-D-ribulos-1-ylimino)methylamino]-1-(5-phospho-beta-D-ribosyl)imidazole-4-carboxamide + L-glutamine = D-erythro-1-(imidazol-4-yl)glycerol 3-phosphate + 5-amino-1-(5-phospho-beta-D-ribosyl)imidazole-4-carboxamide + L-glutamate + H(+). It participates in amino-acid biosynthesis; L-histidine biosynthesis; L-histidine from 5-phospho-alpha-D-ribose 1-diphosphate: step 5/9. IGPS catalyzes the conversion of PRFAR and glutamine to IGP, AICAR and glutamate. The HisF subunit catalyzes the cyclization activity that produces IGP and AICAR from PRFAR using the ammonia provided by the HisH subunit. This is Imidazole glycerol phosphate synthase subunit HisF from Nitrosomonas eutropha (strain DSM 101675 / C91 / Nm57).